Here is a 42-residue protein sequence, read N- to C-terminus: Small protein MntS (42 aa).

The protein localises to the cytoplasm. Functionally, required for repression of mntH by MntR. May function as a chaperone that makes manganese more available by delivering it to the necessary cellular locations when manganese is limiting. The polypeptide is Small protein MntS (mntS) (Escherichia coli (strain K12)).